The sequence spans 154 residues: Putative pre-16S rRNA nuclease (154 aa).

Belongs to the YqgF nuclease family.

It is found in the cytoplasm. In terms of biological role, could be a nuclease involved in processing of the 5'-end of pre-16S rRNA. This chain is Putative pre-16S rRNA nuclease, found in Rickettsia conorii (strain ATCC VR-613 / Malish 7).